Consider the following 329-residue polypeptide: Probable tyrosine--tRNA ligase, cytoplasmic (329 aa).

Position 35 (Y35) interacts with L-tyrosine. The 'HIGH' region signature appears at 40–48 (TTGKPHIAY). Residues Y162, Q166, D169, and Q184 each contribute to the L-tyrosine site. Positions 218-222 (KMSSS) match the 'KMSKS' region motif.

This sequence belongs to the class-I aminoacyl-tRNA synthetase family. Homodimer.

Its subcellular location is the cytoplasm. The enzyme catalyses tRNA(Tyr) + L-tyrosine + ATP = L-tyrosyl-tRNA(Tyr) + AMP + diphosphate + H(+). This is Probable tyrosine--tRNA ligase, cytoplasmic from Vairimorpha ceranae (strain BRL01) (Microsporidian parasite).